Consider the following 176-residue polypeptide: UPF0262 protein GbCGDNIH1_1393 (176 aa).

This sequence belongs to the UPF0262 family.

The polypeptide is UPF0262 protein GbCGDNIH1_1393 (Granulibacter bethesdensis (strain ATCC BAA-1260 / CGDNIH1)).